The primary structure comprises 195 residues: 4'-phosphopantetheinyl transferase AcpT (195 aa).

Belongs to the P-Pant transferase superfamily. Gsp/Sfp/HetI/AcpT family.

It catalyses the reaction apo-[ACP] + CoA = holo-[ACP] + adenosine 3',5'-bisphosphate + H(+). Functionally, may be involved in an alternative pathway for phosphopantetheinyl transfer and holo-ACP synthesis in E.coli. The native apo-protein substrate is unknown. Is able to functionally replace AcpS in vivo but only when expressed at high levels. The protein is 4'-phosphopantetheinyl transferase AcpT (acpT) of Escherichia coli O157:H7.